The sequence spans 676 residues: Vitamin K-dependent protein S (676 aa).

The first 24 residues, 1-24 (MRVLGGRCGALLACLLLVLPVSEA), serve as a signal peptide directing secretion. The propeptide occupies 25-41 (NFLSKQQASQVLVRKRR). Residues 42–87 (ANSLLEETKQGNLERECIEELCNKEEAREVFENDPETDYFYPKYLV) form the Gla domain. 4-carboxyglutamate occurs at positions 47, 48, 55, 57, 60, 61, 66, 67, 70, 73, and 77. Cysteines 58 and 63 form a disulfide. The thrombin-sensitive stretch occupies residues 88–116 (CLRSFQTGLFTAARQSTNAYPDLRSCVNA). In terms of domain architecture, EGF-like 1 spans 117–155 (IPDQCSPLPCNEDGYMSCKDGKASFTCTCKPGWQGEKCE). Cystine bridges form between cysteine 121-cysteine 134, cysteine 126-cysteine 143, cysteine 145-cysteine 154, cysteine 161-cysteine 175, cysteine 171-cysteine 184, cysteine 186-cysteine 199, cysteine 205-cysteine 217, cysteine 212-cysteine 226, cysteine 228-cysteine 241, cysteine 247-cysteine 256, cysteine 252-cysteine 265, cysteine 267-cysteine 282, and cysteine 449-cysteine 475. (3R)-3-hydroxyaspartate is present on aspartate 136. The 44-residue stretch at 157–200 (DINECKDPSNINGGCSQICDNTPGSYHCSCKNGFVMLSNKKDCK) folds into the EGF-like 2; calcium-binding domain. The EGF-like 3; calcium-binding domain occupies 201–242 (DVDECSLKPSICGTAVCKNIPGDFECECPEGYRYNLKSKSCE). Residues 243–283 (DIDECSENMCAQLCVNYPGGYTCYCDGKKGFKLAQDQKSCE) enclose the EGF-like 4; calcium-binding domain. Laminin G-like domains lie at 299–475 (LLYL…NKHC) and 484–666 (YYPG…AHSC). Residues asparagine 499, asparagine 509, and asparagine 530 are each glycosylated (N-linked (GlcNAc...) asparagine). A disulfide bridge connects residues cysteine 639 and cysteine 666.

The iron and 2-oxoglutarate dependent 3-hydroxylation of aspartate and asparagine is (R) stereospecific within EGF domains. As to expression, plasma.

It is found in the secreted. In terms of biological role, anticoagulant plasma protein; it is a cofactor to activated protein C in the degradation of coagulation factors Va and VIIIa. It helps to prevent coagulation and stimulating fibrinolysis. The sequence is that of Vitamin K-dependent protein S (PROS1) from Homo sapiens (Human).